The sequence spans 236 residues: Small ribosomal subunit protein uS2c (236 aa).

This sequence belongs to the universal ribosomal protein uS2 family.

The protein resides in the plastid. The protein localises to the chloroplast. This is Small ribosomal subunit protein uS2c (rps2) from Piper cenocladum (Ant piper).